A 522-amino-acid chain; its full sequence is Subtilisin-like protease 10 (522 aa).

An N-terminal signal peptide occupies residues 1-19 (MFFFKGVVAVLSFFSAVNA). The propeptide occupies 20–117 (APFMKPNNGT…VERDQIGTSQ (98 aa)). In terms of domain architecture, Inhibitor I9 spans 36 to 113 (SYIVLLKRDI…HVAHVERDQI (78 aa)). In terms of domain architecture, Peptidase S8 spans 127-405 (NWGLGRLSNS…KLLVNGANGT (279 aa)). Active-site charge relay system residues include Asp159 and His190. N-linked (GlcNAc...) asparagine glycosylation is present at Asn251. Ser348 serves as the catalytic Charge relay system. Residues 383-397 (SASVKNPGPNTTNKL) show a composition bias toward polar residues. A disordered region spans residues 383-515 (SASVKNPGPN…GWNRPMWWNR (133 aa)). N-linked (GlcNAc...) asparagine glycans are attached at residues Asn392 and Asn403. Residues 432-459 (SQNPPPGQNPPPGQNPPPEQPAPSPPAN) are compositionally biased toward pro residues.

Belongs to the peptidase S8 family.

It is found in the secreted. Its function is as follows. Secreted subtilisin-like serine protease with keratinolytic activity that contributes to pathogenicity. This Trichophyton verrucosum (strain HKI 0517) protein is Subtilisin-like protease 10 (SUB10).